The primary structure comprises 119 residues: Large ribosomal subunit protein uL18 (119 aa).

This sequence belongs to the universal ribosomal protein uL18 family. Part of the 50S ribosomal subunit; part of the 5S rRNA/L5/L18/L25 subcomplex. Contacts the 5S and 23S rRNAs.

Functionally, this is one of the proteins that bind and probably mediate the attachment of the 5S RNA into the large ribosomal subunit, where it forms part of the central protuberance. The polypeptide is Large ribosomal subunit protein uL18 (Sorangium cellulosum (strain So ce56) (Polyangium cellulosum (strain So ce56))).